We begin with the raw amino-acid sequence, 171 residues long: METLAISDKEQFQTRLAYVADIAAMMQRTLQFMAVHGACTRADAATLCLADDTAAWVCGRGAAPAFASFRVRIAGFQHPCRALAHFMFEESLAQRCSKPLPRYTYMNYAFFRGVLAIKLSVYVGDLHADGLPYFVDFARGRALVRTRAPLQFPLPPFERRVEEAVAQSAAK.

This is an uncharacterized protein from Orgyia pseudotsugata multicapsid polyhedrosis virus (OpMNPV).